We begin with the raw amino-acid sequence, 100 residues long: Small ribosomal subunit protein uS14 (100 aa).

The protein belongs to the universal ribosomal protein uS14 family. As to quaternary structure, part of the 30S ribosomal subunit. Contacts proteins S3 and S10.

Binds 16S rRNA, required for the assembly of 30S particles and may also be responsible for determining the conformation of the 16S rRNA at the A site. The sequence is that of Small ribosomal subunit protein uS14 from Thermosynechococcus vestitus (strain NIES-2133 / IAM M-273 / BP-1).